Here is a 148-residue protein sequence, read N- to C-terminus: uncharacterized protein (148 aa).

Residues Cys-21, Cys-24, Cys-88, and Cys-117 each contribute to the [4Fe-4S] cluster site.

This sequence belongs to the complex I 20 kDa subunit family. It depends on [4Fe-4S] cluster as a cofactor.

This is an uncharacterized protein from Methanocaldococcus jannaschii (strain ATCC 43067 / DSM 2661 / JAL-1 / JCM 10045 / NBRC 100440) (Methanococcus jannaschii).